Here is a 206-residue protein sequence, read N- to C-terminus: Protein tyrosine phosphatase receptor type C-associated protein (206 aa).

A helical membrane pass occupies residues 34–54 (VTVVLLLLLLLLLATGLALAW). The segment at 98–173 (GSTDNDLERQ…PGPASAGGSA (76 aa)) is disordered. Serine 99 and serine 153 each carry phosphoserine. Low complexity predominate over residues 161-173 (LGSPGPASAGGSA).

As to quaternary structure, interacts with CD45/PTPRC. In terms of processing, phosphorylated on tyrosine residues.

Its subcellular location is the membrane. This is Protein tyrosine phosphatase receptor type C-associated protein (PTPRCAP) from Homo sapiens (Human).